The chain runs to 119 residues: Large ribosomal subunit protein bL20 (119 aa).

Belongs to the bacterial ribosomal protein bL20 family.

Its function is as follows. Binds directly to 23S ribosomal RNA and is necessary for the in vitro assembly process of the 50S ribosomal subunit. It is not involved in the protein synthesizing functions of that subunit. This is Large ribosomal subunit protein bL20 from Granulibacter bethesdensis (strain ATCC BAA-1260 / CGDNIH1).